We begin with the raw amino-acid sequence, 344 residues long: Holliday junction branch migration complex subunit RuvB (344 aa).

The interval 1 to 182 (MSDRLISATA…FGIISRLEFY (182 aa)) is large ATPase domain (RuvB-L). Residues Leu-21, Arg-22, Gly-63, Lys-66, Thr-67, Thr-68, 129-131 (EDF), Arg-172, Tyr-182, and Arg-219 each bind ATP. Thr-67 is a Mg(2+) binding site. Positions 183 to 253 (NNEDLTRIVT…VAAEALEFFE (71 aa)) are small ATPAse domain (RuvB-S). The head domain (RuvB-H) stretch occupies residues 256–344 (PLGLDHTDRR…QKGLEQNSLF (89 aa)). DNA-binding residues include Arg-311 and Arg-316.

The protein belongs to the RuvB family. Homohexamer. Forms an RuvA(8)-RuvB(12)-Holliday junction (HJ) complex. HJ DNA is sandwiched between 2 RuvA tetramers; dsDNA enters through RuvA and exits via RuvB. An RuvB hexamer assembles on each DNA strand where it exits the tetramer. Each RuvB hexamer is contacted by two RuvA subunits (via domain III) on 2 adjacent RuvB subunits; this complex drives branch migration. In the full resolvosome a probable DNA-RuvA(4)-RuvB(12)-RuvC(2) complex forms which resolves the HJ.

The protein resides in the cytoplasm. It catalyses the reaction ATP + H2O = ADP + phosphate + H(+). The RuvA-RuvB-RuvC complex processes Holliday junction (HJ) DNA during genetic recombination and DNA repair, while the RuvA-RuvB complex plays an important role in the rescue of blocked DNA replication forks via replication fork reversal (RFR). RuvA specifically binds to HJ cruciform DNA, conferring on it an open structure. The RuvB hexamer acts as an ATP-dependent pump, pulling dsDNA into and through the RuvAB complex. RuvB forms 2 homohexamers on either side of HJ DNA bound by 1 or 2 RuvA tetramers; 4 subunits per hexamer contact DNA at a time. Coordinated motions by a converter formed by DNA-disengaged RuvB subunits stimulates ATP hydrolysis and nucleotide exchange. Immobilization of the converter enables RuvB to convert the ATP-contained energy into a lever motion, pulling 2 nucleotides of DNA out of the RuvA tetramer per ATP hydrolyzed, thus driving DNA branch migration. The RuvB motors rotate together with the DNA substrate, which together with the progressing nucleotide cycle form the mechanistic basis for DNA recombination by continuous HJ branch migration. Branch migration allows RuvC to scan DNA until it finds its consensus sequence, where it cleaves and resolves cruciform DNA. The chain is Holliday junction branch migration complex subunit RuvB from Desulforamulus reducens (strain ATCC BAA-1160 / DSM 100696 / MI-1) (Desulfotomaculum reducens).